Here is a 346-residue protein sequence, read N- to C-terminus: Pheromone receptor 2 (346 aa).

Helical transmembrane passes span valine 8–histidine 28, isoleucine 34–alanine 54, leucine 71–leucine 94, leucine 115–valine 135, phenylalanine 160–valine 180, valine 219–leucine 239, and leucine 270–leucine 290.

Belongs to the G-protein coupled receptor 4 family.

The protein resides in the membrane. In terms of biological role, receptor for the A1 pheromone, a prenylated mating factor. The sequence is that of Pheromone receptor 2 (PRA2) from Mycosarcoma maydis (Corn smut fungus).